We begin with the raw amino-acid sequence, 145 residues long: Protein BUD31 homolog 2 (145 aa).

It belongs to the BUD31 (G10) family.

It is found in the nucleus. This Oryza sativa subsp. japonica (Rice) protein is Protein BUD31 homolog 2.